Consider the following 336-residue polypeptide: Phosphate acyltransferase (336 aa).

This sequence belongs to the PlsX family. As to quaternary structure, homodimer. Probably interacts with PlsY.

The protein resides in the cytoplasm. The enzyme catalyses a fatty acyl-[ACP] + phosphate = an acyl phosphate + holo-[ACP]. The protein operates within lipid metabolism; phospholipid metabolism. Its function is as follows. Catalyzes the reversible formation of acyl-phosphate (acyl-PO(4)) from acyl-[acyl-carrier-protein] (acyl-ACP). This enzyme utilizes acyl-ACP as fatty acyl donor, but not acyl-CoA. The chain is Phosphate acyltransferase from Ectopseudomonas mendocina (strain ymp) (Pseudomonas mendocina).